Reading from the N-terminus, the 154-residue chain is UPF0178 protein Glov_0658 (154 aa).

The protein belongs to the UPF0178 family.

The chain is UPF0178 protein Glov_0658 from Trichlorobacter lovleyi (strain ATCC BAA-1151 / DSM 17278 / SZ) (Geobacter lovleyi).